The primary structure comprises 397 residues: 8-amino-7-oxononanoate synthase (397 aa).

R24 serves as a coordination point for substrate. 110 to 111 (GY) provides a ligand contact to pyridoxal 5'-phosphate. Residue H135 coordinates substrate. Pyridoxal 5'-phosphate is bound by residues S183, H211, and T240. K243 bears the N6-(pyridoxal phosphate)lysine mark. T357 lines the substrate pocket.

This sequence belongs to the class-II pyridoxal-phosphate-dependent aminotransferase family. BioF subfamily. In terms of assembly, homodimer. It depends on pyridoxal 5'-phosphate as a cofactor.

It carries out the reaction 6-carboxyhexanoyl-[ACP] + L-alanine + H(+) = (8S)-8-amino-7-oxononanoate + holo-[ACP] + CO2. It participates in cofactor biosynthesis; biotin biosynthesis. Functionally, catalyzes the decarboxylative condensation of pimeloyl-[acyl-carrier protein] and L-alanine to produce 8-amino-7-oxononanoate (AON), [acyl-carrier protein], and carbon dioxide. The sequence is that of 8-amino-7-oxononanoate synthase from Hydrogenovibrio crunogenus (strain DSM 25203 / XCL-2) (Thiomicrospira crunogena).